Consider the following 600-residue polypeptide: tRNA uridine 5-carboxymethylaminomethyl modification enzyme MnmG (600 aa).

10-15 (GGGHAG) serves as a coordination point for FAD. The interval 216–239 (ADPQPRGFTGTPGPRAAESPTWQT) is disordered. An NAD(+)-binding site is contributed by 267 to 281 (GPRYCPSIEDKVVKF).

This sequence belongs to the MnmG family. As to quaternary structure, homodimer. Heterotetramer of two MnmE and two MnmG subunits. Requires FAD as cofactor.

It localises to the cytoplasm. In terms of biological role, NAD-binding protein involved in the addition of a carboxymethylaminomethyl (cmnm) group at the wobble position (U34) of certain tRNAs, forming tRNA-cmnm(5)s(2)U34. The protein is tRNA uridine 5-carboxymethylaminomethyl modification enzyme MnmG of Deinococcus radiodurans (strain ATCC 13939 / DSM 20539 / JCM 16871 / CCUG 27074 / LMG 4051 / NBRC 15346 / NCIMB 9279 / VKM B-1422 / R1).